Here is a 137-residue protein sequence, read N- to C-terminus: Universal stress protein in QAH/OAS sulfhydrylase 3'region (137 aa).

This sequence belongs to the universal stress protein A family.

The chain is Universal stress protein in QAH/OAS sulfhydrylase 3'region from Thermus aquaticus.